The chain runs to 273 residues: 2,3,4,5-tetrahydropyridine-2,6-dicarboxylate N-succinyltransferase (273 aa).

Belongs to the transferase hexapeptide repeat family.

It localises to the cytoplasm. It catalyses the reaction (S)-2,3,4,5-tetrahydrodipicolinate + succinyl-CoA + H2O = (S)-2-succinylamino-6-oxoheptanedioate + CoA. It functions in the pathway amino-acid biosynthesis; L-lysine biosynthesis via DAP pathway; LL-2,6-diaminopimelate from (S)-tetrahydrodipicolinate (succinylase route): step 1/3. The protein is 2,3,4,5-tetrahydropyridine-2,6-dicarboxylate N-succinyltransferase of Bordetella petrii (strain ATCC BAA-461 / DSM 12804 / CCUG 43448).